Consider the following 382-residue polypeptide: Queuine tRNA-ribosyltransferase (382 aa).

Asp-93 functions as the Proton acceptor in the catalytic mechanism. Substrate contacts are provided by residues Asp-93–Phe-97, Asp-147, Gln-191, and Gly-218. The segment at Gly-249–Asp-255 is RNA binding. Asp-268 functions as the Nucleophile in the catalytic mechanism. Residues Thr-273–Arg-277 form an RNA binding; important for wobble base 34 recognition region. Residues Cys-306, Cys-308, Cys-311, and His-337 each coordinate Zn(2+).

Belongs to the queuine tRNA-ribosyltransferase family. In terms of assembly, homodimer. Within each dimer, one monomer is responsible for RNA recognition and catalysis, while the other monomer binds to the replacement base PreQ1. Zn(2+) is required as a cofactor.

It carries out the reaction 7-aminomethyl-7-carbaguanine + guanosine(34) in tRNA = 7-aminomethyl-7-carbaguanosine(34) in tRNA + guanine. The protein operates within tRNA modification; tRNA-queuosine biosynthesis. Functionally, catalyzes the base-exchange of a guanine (G) residue with the queuine precursor 7-aminomethyl-7-deazaguanine (PreQ1) at position 34 (anticodon wobble position) in tRNAs with GU(N) anticodons (tRNA-Asp, -Asn, -His and -Tyr). Catalysis occurs through a double-displacement mechanism. The nucleophile active site attacks the C1' of nucleotide 34 to detach the guanine base from the RNA, forming a covalent enzyme-RNA intermediate. The proton acceptor active site deprotonates the incoming PreQ1, allowing a nucleophilic attack on the C1' of the ribose to form the product. After dissociation, two additional enzymatic reactions on the tRNA convert PreQ1 to queuine (Q), resulting in the hypermodified nucleoside queuosine (7-(((4,5-cis-dihydroxy-2-cyclopenten-1-yl)amino)methyl)-7-deazaguanosine). The protein is Queuine tRNA-ribosyltransferase of Haemophilus influenzae (strain 86-028NP).